A 296-amino-acid chain; its full sequence is Glycine--tRNA ligase alpha subunit (296 aa).

This sequence belongs to the class-II aminoacyl-tRNA synthetase family. Tetramer of two alpha and two beta subunits.

The protein localises to the cytoplasm. It catalyses the reaction tRNA(Gly) + glycine + ATP = glycyl-tRNA(Gly) + AMP + diphosphate. The polypeptide is Glycine--tRNA ligase alpha subunit (Polynucleobacter necessarius subsp. necessarius (strain STIR1)).